A 451-amino-acid chain; its full sequence is Sensor histidine kinase CssS (451 aa).

Topologically, residues 1-9 (MKNKPLAFQ) are cytoplasmic. The chain crosses the membrane as a helical span at residues 10-30 (IWVVISGILLAISILLLVLFS). At 31–165 (NTLRDFFTNE…RDDLAYTLFK (135 aa)) the chain is on the extracellular side. A helical transmembrane segment spans residues 166 to 186 (QLLFIIAVVILLSWIPAIWLA). Residues 187–239 (KYLSRPLVSFEKHVKRISEQDWDDPVKVDRKDEIGKLGHTIEEMRQKLVQKDE) enclose the HAMP domain. The Cytoplasmic portion of the chain corresponds to 187–451 (KYLSRPLVSF…GVTYRIAVPK (265 aa)). Residues 247 to 451 (NISHDLKTPV…GVTYRIAVPK (205 aa)) enclose the Histidine kinase domain. The residue at position 250 (His250) is a Phosphohistidine; by autocatalysis.

The protein localises to the cell membrane. The catalysed reaction is ATP + protein L-histidine = ADP + protein N-phospho-L-histidine.. Functionally, member of the two-component regulatory system CssS/CssR required to control the cellular response to secretion stress. Required for the transcription of htrA. Could detect misfolded proteins at the membrane-cell wall interface and then activate CssR by phosphorylation. This chain is Sensor histidine kinase CssS (cssS), found in Bacillus subtilis (strain 168).